Here is a 209-residue protein sequence, read N- to C-terminus: uncharacterized protein (209 aa).

The stretch at 39–75 (VSFENFMERYDTMEKNIQDLQNKYEEMANNLVAVMAD) forms a coiled coil. The segment at 103–131 (TMKDATSLPPPNPNNEQSVFTNGSPTSGK) is disordered. Polar residues predominate over residues 116-129 (NNEQSVFTNGSPTS).

Belongs to the asfivirus K205R family.

The protein resides in the host cytoplasm. Induces host endoplasmic reticulum stress and consequently activates autophagy and NF-kappa-B signaling pathway. In turn, may induce autophagy-mediated STING1 degradation and innate immune evasion. This is an uncharacterized protein from Ornithodoros (relapsing fever ticks).